Consider the following 819-residue polypeptide: Solute carrier organic anion transporter family member 74D (819 aa).

A disordered region spans residues 1–157 (MTKSNGDVEA…GSSAESSSSC (157 aa)). Residues 1 to 174 (MTKSNGDVEA…RWARRFASTH (174 aa)) are Cytoplasmic-facing. Composition is skewed to polar residues over residues 24–34 (GHGQLNGNGYH), 43–62 (SQAFTPLLSQHNNGTTNGEV), and 71–81 (LYESTPSNNNE). 2 stretches are compositionally biased toward low complexity: residues 91–111 (LKNGLGNILSSNNNGTGNGHS) and 144–157 (DLNGGSSAESSSSC). Residues 175–195 (VFMVVFLLAYILQGMYMTYFV) form a helical membrane-spanning segment. At 196 to 213 (SVITTIEKLFQIKSKTTG) the chain is on the extracellular side. A helical membrane pass occupies residues 214–234 (ILLSASEMGQICTAMLLTYFA). Topologically, residues 235 to 242 (GRGHRPRW) are cytoplasmic. A helical transmembrane segment spans residues 243–263 (IACGMVLFSIAAFSCALPHFI). The Extracellular segment spans residues 264-332 (FGEQLMHSSV…LEQASHSKIT (69 aa)). 3 N-linked (GlcNAc...) asparagine glycosylation sites follow: Asn284, Asn293, and Asn309. Residues 333 to 353 (VIVLCIFFGSLLSSGIGQTAV) traverse the membrane as a helical segment. The Cytoplasmic segment spans residues 354-373 (ATLGIPYIDDNVGSKQSPMY). A helical membrane pass occupies residues 374-394 (MAVTIGMRILGPASGFIFGSF). The Extracellular segment spans residues 395 to 413 (CTRWYVNFSNPGFDATDPR). The N-linked (GlcNAc...) asparagine glycan is linked to Asn401. The helical transmembrane segment at 414 to 434 (WIGAWWLGPVAIGSLMLLASI) threads the bilayer. Residues 435–488 (AMFSFPKQLRGKQKPPGQTATPAAPVEPEEKPKLKDFPKTVRRQLSNDILMFRT) lie on the Cytoplasmic side of the membrane. Residues 444 to 466 (RGKQKPPGQTATPAAPVEPEEKP) are disordered. A helical transmembrane segment spans residues 489 to 509 (ASCVFHLLPIAGLYTFLPKYL). Topologically, residues 510-522 (ETQFRLATYDANM) are extracellular. A helical membrane pass occupies residues 523 to 543 (IAAFCGILVMGIGIVISGLFI). At 544–553 (LKRKPTARGV) the chain is on the cytoplasmic side. Residues 554–574 (AAWIAFTALVYSAGMIILMFI) traverse the membrane as a helical segment. Over 575-667 (GCSMNDFAGY…NGYCDNNCKN (93 aa)) the chain is Extracellular. In terms of domain architecture, Kazal-like spans 593 to 651 (ALIEPTCSAALNCTCDKENFAPICADGKMYISACHAGCSSSSLRPSDNRTLYSDCACIP). 3 disulfides stabilise this stretch: Cys599-Cys630, Cys607-Cys626, and Cys616-Cys649. N-linked (GlcNAc...) asparagine glycosylation occurs at Asn604. The N-linked (GlcNAc...) asparagine glycan is linked to Asn640. A helical membrane pass occupies residues 668-688 (FIYFILIFAICVFMHSTSEVG). Residues 689 to 707 (SMLLVMRCTHPKDKAMAMG) are Cytoplasmic-facing. Residues 708–728 (VIQSAIGLFGNVPCPIIYGAV) traverse the membrane as a helical segment. The Extracellular segment spans residues 729-756 (VDSACLIWKSVCGKHGACSLYDADTFRQ). Residues 757–777 (YFLGITAGIMFLAFLMDLVVW) traverse the membrane as a helical segment. Residues 778-819 (RKAHRIDIAPEDPQEGGPASNGRTLEVSESKQPITPAPDTTV) lie on the Cytoplasmic side of the membrane. The segment at 787–819 (PEDPQEGGPASNGRTLEVSESKQPITPAPDTTV) is disordered. Over residues 807-819 (SKQPITPAPDTTV) the composition is skewed to polar residues.

The protein belongs to the organo anion transporter (TC 2.A.60) family.

The protein localises to the cell membrane. Its function is as follows. Transporter that mediates the cellular uptake of ecdysteroids, including ecdysone, from the hemolymph. The chain is Solute carrier organic anion transporter family member 74D from Drosophila melanogaster (Fruit fly).